Consider the following 306-residue polypeptide: MAKASAAIEEFLAMLAAERGAAANTLAAYRRDLEGAEALAGDLATARRPALSRLGSAWSDLAPATVARKASALRQFYGFLVDEGLREDDPSSALPRPTMRRPLPKTLSHKEVERLFEQAEREAETSRPLPVRLLALIELLYGSGLRATELVSLPVAAVPRDAPFLTVTGKGGVARMVPVSGRAREALQSWMGLRGSDSPYLFPSRKAHITRVRLFQMLKELAVRADLNPDKVSPHVLRHAFATHLLEGGADLRVLQTLLGHADISTTQIYTHVDAARLVALVNERHPLSARAAGKRSTLAEKRTED.

The 80-residue stretch at 2 to 81 (AKASAAIEEF…ALRQFYGFLV (80 aa)) folds into the Core-binding (CB) domain. Residues 102–283 (PLPKTLSHKE…DAARLVALVN (182 aa)) enclose the Tyr recombinase domain. Catalysis depends on residues Arg-146, Lys-170, His-235, Arg-238, and His-261. Tyr-270 functions as the O-(3'-phospho-DNA)-tyrosine intermediate in the catalytic mechanism.

Belongs to the 'phage' integrase family. XerC subfamily. As to quaternary structure, forms a cyclic heterotetrameric complex composed of two molecules of XerC and two molecules of XerD.

It localises to the cytoplasm. Site-specific tyrosine recombinase, which acts by catalyzing the cutting and rejoining of the recombining DNA molecules. The XerC-XerD complex is essential to convert dimers of the bacterial chromosome into monomers to permit their segregation at cell division. It also contributes to the segregational stability of plasmids. The polypeptide is Tyrosine recombinase XerC (Erythrobacter litoralis (strain HTCC2594)).